A 415-amino-acid chain; its full sequence is Serine hydroxymethyltransferase (415 aa).

(6S)-5,6,7,8-tetrahydrofolate-binding positions include Leu119 and 123-125 (GHL). An N6-(pyridoxal phosphate)lysine modification is found at Lys228.

This sequence belongs to the SHMT family. As to quaternary structure, homodimer. It depends on pyridoxal 5'-phosphate as a cofactor.

It localises to the cytoplasm. The enzyme catalyses (6R)-5,10-methylene-5,6,7,8-tetrahydrofolate + glycine + H2O = (6S)-5,6,7,8-tetrahydrofolate + L-serine. It participates in one-carbon metabolism; tetrahydrofolate interconversion. The protein operates within amino-acid biosynthesis; glycine biosynthesis; glycine from L-serine: step 1/1. Its function is as follows. Catalyzes the reversible interconversion of serine and glycine with tetrahydrofolate (THF) serving as the one-carbon carrier. This reaction serves as the major source of one-carbon groups required for the biosynthesis of purines, thymidylate, methionine, and other important biomolecules. Also exhibits THF-independent aldolase activity toward beta-hydroxyamino acids, producing glycine and aldehydes, via a retro-aldol mechanism. This Coprothermobacter proteolyticus (strain ATCC 35245 / DSM 5265 / OCM 4 / BT) protein is Serine hydroxymethyltransferase.